We begin with the raw amino-acid sequence, 86 residues long: Large ribosomal subunit protein uL23 (86 aa).

The protein belongs to the universal ribosomal protein uL23 family. Part of the 50S ribosomal subunit. Contacts protein L29.

In terms of biological role, binds to 23S rRNA. One of the proteins that surrounds the polypeptide exit tunnel on the outside of the ribosome. The chain is Large ribosomal subunit protein uL23 from Methanococcus maripaludis (strain C5 / ATCC BAA-1333).